We begin with the raw amino-acid sequence, 315 residues long: Acetyl-coenzyme A carboxylase carboxyl transferase subunit alpha (315 aa).

In terms of domain architecture, CoA carboxyltransferase C-terminal spans Leu-40–Met-293.

Belongs to the AccA family. As to quaternary structure, acetyl-CoA carboxylase is a heterohexamer composed of biotin carboxyl carrier protein (AccB), biotin carboxylase (AccC) and two subunits each of ACCase subunit alpha (AccA) and ACCase subunit beta (AccD).

Its subcellular location is the cytoplasm. It carries out the reaction N(6)-carboxybiotinyl-L-lysyl-[protein] + acetyl-CoA = N(6)-biotinyl-L-lysyl-[protein] + malonyl-CoA. The protein operates within lipid metabolism; malonyl-CoA biosynthesis; malonyl-CoA from acetyl-CoA: step 1/1. Its function is as follows. Component of the acetyl coenzyme A carboxylase (ACC) complex. First, biotin carboxylase catalyzes the carboxylation of biotin on its carrier protein (BCCP) and then the CO(2) group is transferred by the carboxyltransferase to acetyl-CoA to form malonyl-CoA. The polypeptide is Acetyl-coenzyme A carboxylase carboxyl transferase subunit alpha (Pseudomonas syringae pv. tomato (strain ATCC BAA-871 / DC3000)).